We begin with the raw amino-acid sequence, 389 residues long: Elongation factor Tu-3 (389 aa).

One can recognise a tr-type G domain in the interval 10–203; sequence KPHLNIGTMG…AVDTYVPMPE (194 aa). The tract at residues 19-26 is G1; the sequence is GHVDHGKT. Residue 19-26 participates in GTP binding; that stretch reads GHVDHGKT. T26 contacts Mg(2+). Residues 60-64 are G2; it reads GITIN. The tract at residues 81-84 is G3; that stretch reads DMPG. GTP-binding positions include 81–85 and 136–139; these read DMPGH and NKAD. Residues 136-139 form a G4 region; that stretch reads NKAD. The interval 173–175 is G5; the sequence is SGL.

Belongs to the TRAFAC class translation factor GTPase superfamily. Classic translation factor GTPase family. EF-Tu/EF-1A subfamily. Monomer.

The protein resides in the cytoplasm. The enzyme catalyses GTP + H2O = GDP + phosphate + H(+). Functionally, GTP hydrolase that promotes the GTP-dependent binding of aminoacyl-tRNA to the A-site of ribosomes during protein biosynthesis. This chain is Elongation factor Tu-3, found in Streptomyces ramocissimus.